Here is a 61-residue protein sequence, read N- to C-terminus: Peroxidase 1 (61 aa).

Residues 1 to 32 (DNTAKEKDSPANLSLRTCAAGDNAEQPLDPSR) form a disordered region. N-linked (GlcNAc...) asparagine glycosylation occurs at N12. Ca(2+)-binding residues include D29, S31, and D36.

The protein belongs to the peroxidase family. Classical plant (class III) peroxidase subfamily. Ca(2+) is required as a cofactor. Requires heme b as cofactor.

It localises to the secreted. It catalyses the reaction 2 a phenolic donor + H2O2 = 2 a phenolic radical donor + 2 H2O. Functionally, removal of H(2)O(2), oxidation of toxic reductants, biosynthesis and degradation of lignin, suberization, auxin catabolism, response to environmental stresses such as wounding, pathogen attack and oxidative stress. These functions might be dependent on each isozyme/isoform in each plant tissue. This chain is Peroxidase 1, found in Vitis rotundifolia (Muscadine grape).